Consider the following 270-residue polypeptide: Nuclease P1 (270 aa).

Positions 1, 6, 15, 45, and 60 each coordinate a divalent metal cation. Position 1 to 6 (1 to 6 (WGALGH)) interacts with substrate. Residues 45–51 (DEYRLTS), 60–63 (HFID), and 73–78 (NVDYER) each bind substrate. 2 cysteine pairs are disulfide-bonded: Cys72–Cys217 and Cys80–Cys85. The N-linked (GlcNAc...) asparagine glycan is linked to Asn92. Residues His116, Asp120, and His126 each contribute to the a divalent metal cation site. Residues 116-164 (HFIGDMTQPLHDEAYAVGGNKINVTFDGYHDNLHSDWDTYMPQKLIGGH) form a substrate binding region. N-linked (GlcNAc...) asparagine glycosylation occurs at Asn138. The a divalent metal cation site is built by His149 and Asp153. Residues Asn184 and Asn197 are each glycosylated (N-linked (GlcNAc...) asparagine).

Belongs to the nuclease type I family. Zn(2+) is required as a cofactor.

It is found in the secreted. It catalyses the reaction Endonucleolytic cleavage to 5'-phosphomononucleotide and 5'-phosphooligonucleotide end-products.. Its function is as follows. Hydrolyzes only single-stranded DNA and RNA without apparent specificity for bases. In Penicillium citrinum, this protein is Nuclease P1.